Here is a 412-residue protein sequence, read N- to C-terminus: Phosphoglycerate kinase 1 (412 aa).

Residues 28–30 (DFN), 65–68 (HQGR), Arg-122, and Arg-162 contribute to the substrate site. Residues Glu-336 and 361 to 364 (GGHT) each bind ATP.

The protein belongs to the phosphoglycerate kinase family. Monomer.

The protein localises to the cytoplasm. The catalysed reaction is (2R)-3-phosphoglycerate + ATP = (2R)-3-phospho-glyceroyl phosphate + ADP. The protein operates within carbohydrate degradation; glycolysis; pyruvate from D-glyceraldehyde 3-phosphate: step 2/5. This chain is Phosphoglycerate kinase 1, found in Methanosarcina acetivorans (strain ATCC 35395 / DSM 2834 / JCM 12185 / C2A).